A 382-amino-acid polypeptide reads, in one-letter code: Acetylxylan esterase A (382 aa).

An N-terminal signal peptide occupies residues 1–21 (MKSLSFSFLVTLFLYLTLSSA). Residues 22–31 (RTLGKDVNKR) constitute a propeptide that is removed on maturation. The tract at residues 35-307 (GSLQQVTGFG…GAKDMEWFGF (273 aa)) is catalytic. Asn-46 carries an N-linked (GlcNAc...) asparagine glycan. Residue Ser-152 is the Charge relay system of the active site. An N-linked (GlcNAc...) asparagine glycan is attached at Asn-194. Residues 308–345 (SGSGSSSTTTASATKTSTTSTTSTKTTSSTSSTTTSST) are ser/Thr-rich linker. Low complexity predominate over residues 313–345 (SSTTTASATKTSTTSTTSTKTTSSTSSTTTSST). The tract at residues 313–346 (SSTTTASATKTSTTSTTSTKTTSSTSSTTTSSTG) is disordered. One can recognise a CBM1 domain in the interval 346–382 (GVAAHWGQCGGSGWTGPTVCESGYTCTYSNAWYSQCL).

Belongs to the carbohydrate esterase 1 (CE1) family. AxeA subfamily. Monomer. In terms of processing, glycosylated.

It is found in the secreted. It carries out the reaction Deacetylation of xylans and xylo-oligosaccharides.. The protein operates within glycan degradation; xylan degradation. Inactivated by phenylmethylsulfonylfluorid (PMSF), a specific inhibitor of serine esterases. Its function is as follows. Acetylxylan esterase involved in the hydrolysis of xylan, a major structural heterogeneous polysaccharide found in plant biomass representing the second most abundant polysaccharide in the biosphere, after cellulose. Degrades acetylated xylans by cleaving acetyl side groups from the hetero-xylan backbone. In Talaromyces purpureogenus (Soft rot fungus), this protein is Acetylxylan esterase A (axeA).